The sequence spans 187 residues: HTH-type transcriptional regulator NfxB (187 aa).

A DNA-binding region (H-T-H motif) is located at residues 26–45 (LKELAEAAGVSKATLHRFCG).

Its function is as follows. Confers resistance to guinolones. May negatively regulate the expression of genes that are associated with cell permeability to drugs. The chain is HTH-type transcriptional regulator NfxB (nfxB) from Pseudomonas aeruginosa (strain ATCC 15692 / DSM 22644 / CIP 104116 / JCM 14847 / LMG 12228 / 1C / PRS 101 / PAO1).